Reading from the N-terminus, the 272-residue chain is NH(3)-dependent NAD(+) synthetase (272 aa).

Residue 45–52 (GISGGQDS) coordinates ATP. A Mg(2+)-binding site is contributed by Asp-51. Residue Arg-138 coordinates deamido-NAD(+). Thr-158 serves as a coordination point for ATP. Glu-163 is a Mg(2+) binding site. Residues Lys-171 and Asp-178 each contribute to the deamido-NAD(+) site. Residues Lys-187 and Thr-209 each contribute to the ATP site. 258 to 259 (HK) serves as a coordination point for deamido-NAD(+).

Belongs to the NAD synthetase family. As to quaternary structure, homodimer.

The catalysed reaction is deamido-NAD(+) + NH4(+) + ATP = AMP + diphosphate + NAD(+) + H(+). It participates in cofactor biosynthesis; NAD(+) biosynthesis; NAD(+) from deamido-NAD(+) (ammonia route): step 1/1. Catalyzes the ATP-dependent amidation of deamido-NAD to form NAD. Uses ammonia as a nitrogen source. This Bacillus cereus (strain Q1) protein is NH(3)-dependent NAD(+) synthetase.